The primary structure comprises 1021 residues: MNLFNLDRFRFEKRSKIEEAPEAAPQPSQARPSSPISLSAEEENAEGEGSRANTPDSDVTEKTEDSSVPEPPDNERKASLSCFQNQRAIQEYIDLSSDTEDVSPNCSSTVQEKKFSKDTVIIVSEPSEDEESHDLPSVTRRNDSSELEDLSELEDLKDAKLQTLKELFPQRSDSDLLKLIESTSTMDGAIAAALLMFGDAGGGPRKRKLSSSSEEDDVNDDQSVKQPRGDRGEESNESAEASSNWEKQESIVLKLQKEFPNFDKQELREVLKEHEWMYTEALESLKVFAEDQDVQCASQSEVTNGKEVARNQNYSKNATKIKMKQKISVKPQNGFNKKRKKNVFNPKKAVEDSEYDSGSDAGSSLDEDYSSCEEVMEDGYKGKILHFLQVSSIAELTLIPKCSQKKAQKITELRPFNNWEALFTKMSKINGLSEDLIWNCKTVIQERDVVIRLMNKCEDISNKLTKQVTMLTGNGGGWNREQPSLLNQSLSLKPYQKVGLNWLALVHKHGLNGILADEMGLGKTIQAIAFLAYLFQEGNKGPHLIVVPASTIDNWLREVNLWCPSLNVLCYYGSQEERKQIRFNIHNKYEDYNVIVTTYNCAISSSDDRSLFRRLKLNYAIFDEGHMLKNMGSIRYQHLMTINARNRLLLTGTPVQNNLLELMSLLNFVMPHMFSSSTSEIRRMFSSKTKPADEQSIYEKERIAHAKQIIKPFILRRVKEEVLKLLPPKKDRIELCAMSEKQEQLYSGLFNRLKKSINNLEKNTEMCNVMMQLRKMANHPLLHRQYYTPEKLKEMSQLMLKEPTHCEANPDLIFEDMEVMTDFELHVLCKQYQHINSYQLDMDLILDSGKFRALGCILSELKQKGDRVVLFSQFTMMLDILEVLLKHHQHRYLRLDGKTQISERIHLIDEFNTDMDIFVFLLSTKAGGLGINLTSANVVILHDIDCNPYNDKQAEDRCHRVGQTKEVLVIKLISQGTIEESMLKINQQKLKLEQDMTTVDEADEGSMPADIATLLKTSMGL.

Position 1 is an N-acetylmethionine (Met-1). 2 disordered regions span residues 1–82 and 124–151; these read MNLF…SLSC and SEPSEDEESHDLPSVTRRNDSSELEDLS. The segment covering 7 to 19 has biased composition (basic and acidic residues); the sequence is DRFRFEKRSKIEE. The segment covering 22–39 has biased composition (low complexity); that stretch reads EAAPQPSQARPSSPISLS. At Thr-54 the chain carries Phosphothreonine. At Ser-57 the chain carries Phosphoserine. Lys-77 participates in a covalent cross-link: Glycyl lysine isopeptide (Lys-Gly) (interchain with G-Cter in SUMO2). Phosphoserine is present on residues Ser-79, Ser-124, Ser-127, Ser-132, Ser-144, Ser-145, and Ser-151. Positions 156 to 198 constitute a CUE 1 domain; the sequence is LKDAKLQTLKELFPQRSDSDLLKLIESTSTMDGAIAAALLMFG. Positions 201 to 246 are disordered; that stretch reads GGGPRKRKLSSSSEEDDVNDDQSVKQPRGDRGEESNESAEASSNWE. Phosphoserine occurs at positions 210, 213, 235, and 238. One can recognise a CUE 2 domain in the interval 247–290; it reads KQESIVLKLQKEFPNFDKQELREVLKEHEWMYTEALESLKVFAE. Ser-298 carries the post-translational modification Phosphoserine. The tract at residues 329–366 is disordered; it reads VKPQNGFNKKRKKNVFNPKKAVEDSEYDSGSDAGSSLD. Residues Lys-330 and Lys-466 each participate in a glycyl lysine isopeptide (Lys-Gly) (interchain with G-Cter in SUMO2) cross-link. The region spanning 504–672 is the Helicase ATP-binding domain; sequence ALVHKHGLNG…MSLLNFVMPH (169 aa). 516–524 serves as a coordination point for ATP; that stretch reads ADEMGLGKT. The DEGH box signature appears at 623–626; it reads DEGH. A Nuclear localization signal motif is present at residues 716–733; the sequence is RRVKEEVLKLLPPKKDRI. Lys-719 is covalently cross-linked (Glycyl lysine isopeptide (Lys-Gly) (interchain with G-Cter in SUMO2)). Residues 853 to 1005 form the Helicase C-terminal domain; the sequence is ALGCILSELK…MTTVDEADEG (153 aa). 892–899 contributes to the ATP binding site; it reads YLRLDGKT. Lys-991 is covalently cross-linked (Glycyl lysine isopeptide (Lys-Gly) (interchain with G-Cter in SUMO2)). Positions 1000 to 1003 match the DEAD box motif; sequence DEAD.

This sequence belongs to the SNF2/RAD54 helicase family. Binds to DNA preferentially in the vicinity of transcriptional start sites. Interacts with MSH2 and TRIM28. Part of a complex composed of TRIM28, HDAC1, HDAC2 and EHMT2. Interacts with PCNA.

Its subcellular location is the nucleus. The protein resides in the chromosome. The enzyme catalyses ATP + H2O = ADP + phosphate + H(+). DNA helicase that possesses intrinsic ATP-dependent nucleosome-remodeling activity and is both required for DNA repair and heterochromatin organization. Promotes DNA end resection of double-strand breaks (DSBs) following DNA damage: probably acts by weakening histone DNA interactions in nucleosomes flanking DSBs. Required for the restoration of heterochromatin organization after replication. Acts at replication sites to facilitate the maintenance of heterochromatin by directing H3 and H4 histones deacetylation, H3 'Lys-9' trimethylation (H3K9me3) and restoration of silencing. This chain is SWI/SNF-related matrix-associated actin-dependent regulator of chromatin subfamily A containing DEAD/H box 1 (Smarcad1), found in Mus musculus (Mouse).